The sequence spans 278 residues: Ankyrin repeat and SOCS box protein 13 (278 aa).

ANK repeat units lie at residues Val-18–Gln-47, Asp-51–Ala-80, Asp-84–Pro-113, Tyr-116–Ala-145, His-149–Ala-178, and Leu-181–Ala-210. The SOCS box domain occupies Ala-229–Asn-278.

Belongs to the ankyrin SOCS box (ASB) family.

It participates in protein modification; protein ubiquitination. In terms of biological role, may be a substrate-recognition component of a SCF-like ECS (Elongin-Cullin-SOCS-box protein) E3 ubiquitin-protein ligase complex which mediates the ubiquitination and subsequent proteasomal degradation of target proteins. The polypeptide is Ankyrin repeat and SOCS box protein 13 (ASB13) (Homo sapiens (Human)).